The sequence spans 326 residues: UDP-N-acetylglucosamine transporter (326 aa).

A run of 8 helical transmembrane segments spans residues 4-24, 38-58, 136-156, 174-194, 212-232, 243-263, 269-289, and 293-313; these read NLKY…VLTM, LSST…IFLV, LGVY…FVQW, FVGL…GVYF, LGFF…GELV, QLTW…AAVI, ILKG…SYFW, and FVPT…TFLY.

It belongs to the nucleotide-sugar transporter family. SLC35A subfamily. Interacts with SLC35A2; the interaction is reduced in the presence of SLC35A4. Found in a complex with SLC35A2 and SLC35A4. Interacts with MGAT4B. In terms of processing, O-Glcnacylation regulates the stability of SLC35A3 and the specific complex formation with MGAT4B.

The protein resides in the golgi apparatus membrane. It carries out the reaction UMP(out) + UDP-N-acetyl-alpha-D-glucosamine(in) = UMP(in) + UDP-N-acetyl-alpha-D-glucosamine(out). Transports diphosphate-N-acetylglucosamine (UDP-GlcNAc) from the cytosol into the lumen of the Golgi apparatus, functioning as an antiporter that exchanges UDP-N-acetyl-alpha-D-glucosamine for UMP. May supply UDP-GlcNAc as substrate for Golgi-resident glycosyltransferases that generate highly branched, multiantennary complex N-glycans and keratan sulfate. However, the exact role of SLC35A3 still needs to be elucidated, it could be a member of a catalytically more efficient multiprotein complex rather than function independently as a single transporter. The sequence is that of UDP-N-acetylglucosamine transporter (Slc35a3) from Mus musculus (Mouse).